The primary structure comprises 302 residues: Aspartate carbamoyltransferase catalytic subunit (302 aa).

2 residues coordinate carbamoyl phosphate: R51 and T52. K80 serves as a coordination point for L-aspartate. Carbamoyl phosphate is bound by residues R101, H129, and Q132. R162 and R224 together coordinate L-aspartate. Carbamoyl phosphate contacts are provided by L263 and P264.

Belongs to the aspartate/ornithine carbamoyltransferase superfamily. ATCase family. Heterododecamer (2C3:3R2) of six catalytic PyrB chains organized as two trimers (C3), and six regulatory PyrI chains organized as three dimers (R2).

The catalysed reaction is carbamoyl phosphate + L-aspartate = N-carbamoyl-L-aspartate + phosphate + H(+). It functions in the pathway pyrimidine metabolism; UMP biosynthesis via de novo pathway; (S)-dihydroorotate from bicarbonate: step 2/3. Its function is as follows. Catalyzes the condensation of carbamoyl phosphate and aspartate to form carbamoyl aspartate and inorganic phosphate, the committed step in the de novo pyrimidine nucleotide biosynthesis pathway. The polypeptide is Aspartate carbamoyltransferase catalytic subunit (Azobacteroides pseudotrichonymphae genomovar. CFP2).